The primary structure comprises 208 residues: Protein-L-isoaspartate O-methyltransferase (208 aa).

Ser-59 is a catalytic residue.

This sequence belongs to the methyltransferase superfamily. L-isoaspartyl/D-aspartyl protein methyltransferase family.

It is found in the cytoplasm. The catalysed reaction is [protein]-L-isoaspartate + S-adenosyl-L-methionine = [protein]-L-isoaspartate alpha-methyl ester + S-adenosyl-L-homocysteine. Catalyzes the methyl esterification of L-isoaspartyl residues in peptides and proteins that result from spontaneous decomposition of normal L-aspartyl and L-asparaginyl residues. It plays a role in the repair and/or degradation of damaged proteins. The sequence is that of Protein-L-isoaspartate O-methyltransferase from Cronobacter sakazakii (strain ATCC BAA-894) (Enterobacter sakazakii).